The sequence spans 306 residues: tRNA (guanine-N(1)-)-methyltransferase (306 aa).

S-adenosyl-L-methionine contacts are provided by residues G157 and 182-187 (IGDYVL).

Belongs to the RNA methyltransferase TrmD family. Homodimer.

Its subcellular location is the cytoplasm. The enzyme catalyses guanosine(37) in tRNA + S-adenosyl-L-methionine = N(1)-methylguanosine(37) in tRNA + S-adenosyl-L-homocysteine + H(+). Its function is as follows. Specifically methylates guanosine-37 in various tRNAs. The polypeptide is tRNA (guanine-N(1)-)-methyltransferase (Bifidobacterium adolescentis (strain ATCC 15703 / DSM 20083 / NCTC 11814 / E194a)).